Reading from the N-terminus, the 663-residue chain is UvrABC system protein B (663 aa).

The Helicase ATP-binding domain maps to 31 to 271 (DNIEGGEKAQ…EQSISKIQAE (241 aa)). 44-51 (GATGTGKT) is an ATP binding site. Residues 97–120 (YYDYYQPEAYVPSSDTYIEKDSSV) carry the Beta-hairpin motif. One can recognise a Helicase C-terminal domain in the interval 435–601 (QMDDLLGEIN…TIKKDIRDLI (167 aa)). Residues 627 to 662 (QEAIKQLQKNMQEAAELLDFELAAQLRDLILELKAM) form the UVR domain.

Belongs to the UvrB family. As to quaternary structure, forms a heterotetramer with UvrA during the search for lesions. Interacts with UvrC in an incision complex.

It is found in the cytoplasm. Its function is as follows. The UvrABC repair system catalyzes the recognition and processing of DNA lesions. A damage recognition complex composed of 2 UvrA and 2 UvrB subunits scans DNA for abnormalities. Upon binding of the UvrA(2)B(2) complex to a putative damaged site, the DNA wraps around one UvrB monomer. DNA wrap is dependent on ATP binding by UvrB and probably causes local melting of the DNA helix, facilitating insertion of UvrB beta-hairpin between the DNA strands. Then UvrB probes one DNA strand for the presence of a lesion. If a lesion is found the UvrA subunits dissociate and the UvrB-DNA preincision complex is formed. This complex is subsequently bound by UvrC and the second UvrB is released. If no lesion is found, the DNA wraps around the other UvrB subunit that will check the other stand for damage. This is UvrABC system protein B from Streptococcus equi subsp. zooepidemicus (strain H70).